We begin with the raw amino-acid sequence, 174 residues long: Probable N-acetyltransferase Rv2775 (174 aa).

The 167-residue stretch at isoleucine 6–proline 172 folds into the N-acetyltransferase domain.

Belongs to the acetyltransferase family.

The protein is Probable N-acetyltransferase Rv2775 of Mycobacterium tuberculosis (strain ATCC 25618 / H37Rv).